A 166-amino-acid chain; its full sequence is Bacterial non-heme ferritin (166 aa).

The Ferritin-like diiron domain maps to Leu2–Gly145. Positions 17, 50, 53, 94, and 127 each coordinate Fe cation.

This sequence belongs to the ferritin family. Prokaryotic subfamily.

Its subcellular location is the cytoplasm. The catalysed reaction is 4 Fe(2+) + O2 + 6 H2O = 4 iron(III) oxide-hydroxide + 12 H(+). Iron-storage protein. This chain is Bacterial non-heme ferritin (ftnA), found in Staphylococcus epidermidis (strain ATCC 35984 / DSM 28319 / BCRC 17069 / CCUG 31568 / BM 3577 / RP62A).